Here is a 403-residue protein sequence, read N- to C-terminus: uncharacterized protein (403 aa).

A signal peptide spans 1 to 26; that stretch reads MYKFKTNLFLVIYFIAIFSIESSISS. At 27 to 381 the chain is on the extracellular side; that stretch reads FNTEINSNSN…DSDNSSFGIS (355 aa). N-linked (GlcNAc...) asparagine glycans are attached at residues N58, N90, N93, N124, N137, N371, and N375. The chain crosses the membrane as a helical span at residues 382-402; it reads IQKYLNSFLNSFIIILIINII. A topological domain (cytoplasmic) is located at residue I403.

It is found in the membrane. This is an uncharacterized protein from Dictyostelium discoideum (Social amoeba).